The primary structure comprises 690 residues: Proprotein convertase subtilisin/kexin type 9 (690 aa).

The N-terminal stretch at 1-28 (MGTVSSRRSWWPLPLLLLLLLGPAGARA) is a signal peptide. A propeptide spanning residues 29–150 (QEDEDGDYEE…IEEDSSVFAQ (122 aa)) is cleaved from the precursor. At Tyr36 the chain carries Sulfotyrosine. Phosphoserine is present on Ser45. The 73-residue stretch at 75-147 (TYVVVLKEET…VDYIEEDSSV (73 aa)) folds into the Inhibitor I9 domain. Residues 153 to 459 (PWNLERITPP…GWQLFCRTVW (307 aa)) enclose the Peptidase S8 domain. Catalysis depends on charge relay system residues Asp184 and His224. Disulfide bonds link Cys221–Cys253 and Cys321–Cys356. Residue Ser384 is the Charge relay system of the active site. Residues 448 to 690 (GAGWQLFCRT…HLVQASQELQ (243 aa)) are C-terminal domain. 3 disulfide bridges follow: Cys455–Cys525, Cys475–Cys524, and Cys484–Cys507. Residue Asn531 is glycosylated (N-linked (GlcNAc...) asparagine). 6 cysteine pairs are disulfide-bonded: Cys532-Cys599, Cys550-Cys598, Cys560-Cys586, Cys606-Cys677, Cys624-Cys676, and Cys633-Cys652. At Ser686 the chain carries Phosphoserine.

Belongs to the peptidase S8 family. Monomer. Can self-associate to form dimers and higher multimers which may have increased LDLR degrading activity. The precursor protein but not the mature protein may form multimers. Interacts with APOB, VLDLR, LRP8/APOER2 and BACE1. The full-length immature form (pro-PCSK9) interacts with SCNN1A, SCNN1B and SCNN1G. The pro-PCSK9 form (via C-terminal domain) interacts with LDLR. Interacts (via the C-terminal domain) with ANXA2 (via repeat Annexin 1); the interaction inhibits the degradation of LDLR. The cofactor is Ca(2+). Post-translationally, cleavage by furin and PCSK5 generates a truncated inactive protein that is unable to induce LDLR degradation. In terms of processing, undergoes autocatalytic cleavage in the endoplasmic reticulum to release the propeptide from the N-terminus and the cleavage of the propeptide is strictly required for its maturation and activation. The cleaved propeptide however remains associated with the catalytic domain through non-covalent interactions, preventing potential substrates from accessing its active site. As a result, it is secreted from cells as a propeptide-containing, enzymatically inactive protein. Phosphorylation protects the propeptide against proteolysis.

The protein resides in the cytoplasm. The protein localises to the secreted. It localises to the endosome. It is found in the lysosome. Its subcellular location is the cell surface. The protein resides in the endoplasmic reticulum. The protein localises to the golgi apparatus. Its proteolytic activity is autoinhibited by the non-covalent binding of the propeptide to the catalytic domain. Inhibited by EGTA. Crucial player in the regulation of plasma cholesterol homeostasis. Binds to low-density lipid receptor family members: low density lipoprotein receptor (LDLR), very low density lipoprotein receptor (VLDLR), apolipoprotein E receptor (LRP1/APOER) and apolipoprotein receptor 2 (LRP8/APOER2), and promotes their degradation in intracellular acidic compartments. Acts via a non-proteolytic mechanism to enhance the degradation of the hepatic LDLR through a clathrin LDLRAP1/ARH-mediated pathway. May prevent the recycling of LDLR from endosomes to the cell surface or direct it to lysosomes for degradation. Can induce ubiquitination of LDLR leading to its subsequent degradation. Inhibits intracellular degradation of APOB via the autophagosome/lysosome pathway in a LDLR-independent manner. Involved in the disposal of non-acetylated intermediates of BACE1 in the early secretory pathway. Inhibits epithelial Na(+) channel (ENaC)-mediated Na(+) absorption by reducing ENaC surface expression primarily by increasing its proteasomal degradation. Regulates neuronal apoptosis via modulation of LRP8/APOER2 levels and related anti-apoptotic signaling pathways. The sequence is that of Proprotein convertase subtilisin/kexin type 9 (PCSK9) from Gorilla gorilla gorilla (Western lowland gorilla).